Reading from the N-terminus, the 287-residue chain is Phosphatidylglycerol--prolipoprotein diacylglyceryl transferase (287 aa).

4 helical membrane-spanning segments follow: residues 15 to 35 (IGPL…ILAI), 55 to 75 (FVMF…VFFE), 90 to 110 (IWEG…TAIV), and 117 to 137 (VSFW…QAIG). Arginine 138 is an a 1,2-diacyl-sn-glycero-3-phospho-(1'-sn-glycerol) binding site. 2 helical membrane passes run 180–200 (HPTF…LLLL) and 238–258 (IIRT…IFII).

The protein belongs to the Lgt family.

It localises to the cell membrane. The enzyme catalyses L-cysteinyl-[prolipoprotein] + a 1,2-diacyl-sn-glycero-3-phospho-(1'-sn-glycerol) = an S-1,2-diacyl-sn-glyceryl-L-cysteinyl-[prolipoprotein] + sn-glycerol 1-phosphate + H(+). It participates in protein modification; lipoprotein biosynthesis (diacylglyceryl transfer). Catalyzes the transfer of the diacylglyceryl group from phosphatidylglycerol to the sulfhydryl group of the N-terminal cysteine of a prolipoprotein, the first step in the formation of mature lipoproteins. In Oceanobacillus iheyensis (strain DSM 14371 / CIP 107618 / JCM 11309 / KCTC 3954 / HTE831), this protein is Phosphatidylglycerol--prolipoprotein diacylglyceryl transferase.